The following is an 83-amino-acid chain: Small ribosomal subunit protein bS20 (83 aa).

The protein belongs to the bacterial ribosomal protein bS20 family.

In terms of biological role, binds directly to 16S ribosomal RNA. In Leuconostoc citreum (strain KM20), this protein is Small ribosomal subunit protein bS20.